Reading from the N-terminus, the 616-residue chain is Matrix metalloproteinase-21 (616 aa).

The first 22 residues, 1–22, serve as a signal peptide directing secretion; it reads MPTAPALGALLLLLGALTPGHQ. The propeptide occupies 23 to 192; it reads EKLFHSRDHS…TSTSKIRKKR (170 aa). Residues 139-146 carry the Cysteine switch motif; sequence PRCGVPDN. C141 contacts Zn(2+). A disordered region spans residues 157-186; that stretch reads SNSNNVTEKASGKSLNTTTNQNPENGTSTS. N161, N172, and N181 each carry an N-linked (GlcNAc...) asparagine glycan. Residue H329 participates in Zn(2+) binding. The active site involves E330. Zn(2+) contacts are provided by H333 and H339. A disulfide bond links C375 and C606. Hemopexin repeat units follow at residues 376 to 435, 437 to 493, 494 to 542, and 549 to 605; these read EGSF…WHGI, AEGI…FPKI, PSPI…FPAV, and FGNI…WTDI. An N-linked (GlcNAc...) asparagine glycan is attached at N418. N-linked (GlcNAc...) asparagine glycosylation occurs at N597.

It belongs to the peptidase M10A family. Zn(2+) serves as cofactor. Ca(2+) is required as a cofactor. Post-translationally, the precursor is cleaved by a furin endopeptidase.

It is found in the secreted. Functionally, may play a role in gastrulation-related cell movement. Plays a specialized role in the generation of left-right asymmetry during embryogenesis. May act as a negative regulator of the NOTCH-signaling pathway. The sequence is that of Matrix metalloproteinase-21 (MMP21) from Cynops pyrrhogaster (Japanese fire-bellied newt).